Consider the following 506-residue polypeptide: Protein CYCLOPS (506 aa).

Disordered regions lie at residues 193-223 and 385-434; these read TVNSAPMSNTPSQTPTFVSPSSSSTSPLDNP and KENL…RSST. Low complexity predominate over residues 202–219; it reads TPSQTPTFVSPSSSSTSP. The segment covering 385–394 has biased composition (basic and acidic residues); it reads KENLKDDRKK. The Nuclear localization signal signature appears at 415-418; sequence KKRR. The segment covering 422–432 has biased composition (basic and acidic residues); sequence SRKMAEAKERS. Residues 441-506 adopt a coiled-coil conformation; sequence IQVVLKRCET…IERIVSDTNT (66 aa).

It belongs to the CYCLOPS family. As to expression, highly epressed in roots. Expressed at very low levels in leaves, stems and panicles.

The protein resides in the nucleus. Functionally, involved in arbuscular mycorrhizal (AM) symbiosis. Required for fungal infection in roots and arbuscule development during AM symbiosis. The protein is Protein CYCLOPS of Oryza sativa subsp. japonica (Rice).